The sequence spans 468 residues: Aldehyde dehydrogenase family 3 member B1 (468 aa).

Methionine 1 bears the N-acetylmethionine mark. 188-193 (GSPRVG) is an NAD(+) binding site. Residues glutamate 210 and cysteine 244 contribute to the active site. Cysteine 463 carries the S-palmitoyl cysteine lipid modification. Residue cysteine 465 is modified to Cysteine methyl ester. Cysteine 465 carries S-geranylgeranyl cysteine lipidation. The propeptide at 466-468 (TLL) is removed in mature form.

Belongs to the aldehyde dehydrogenase family. Post-translationally, dually lipidated in the C-terminus; prenylation occurs prior to, and is a prerequisite for palmitoylation. It is also required for activity towards long-chain substrates. As to expression, highest expression in kidney and lung.

The protein resides in the cell membrane. The enzyme catalyses an aldehyde + NADP(+) + H2O = a carboxylate + NADPH + 2 H(+). It carries out the reaction an aldehyde + NAD(+) + H2O = a carboxylate + NADH + 2 H(+). It catalyses the reaction a long-chain fatty aldehyde + NAD(+) + H2O = a long-chain fatty acid + NADH + 2 H(+). The catalysed reaction is a medium-chain fatty aldehyde + NAD(+) + H2O = a medium-chain fatty acid + NADH + 2 H(+). The enzyme catalyses octanal + NAD(+) + H2O = octanoate + NADH + 2 H(+). It carries out the reaction nonanal + NAD(+) + H2O = nonanoate + NADH + 2 H(+). It catalyses the reaction hexadecanoate + NADH + 2 H(+) = hexadecanal + NAD(+) + H2O. The catalysed reaction is (2E)-octenal + NAD(+) + H2O = (2E)-octenoate + NADH + 2 H(+). The enzyme catalyses (E)-non-2-enal + NAD(+) + H2O = (E)-non-2-enoate + NADH + 2 H(+). It carries out the reaction (E)-4-hydroxynon-2-enal + NAD(+) + H2O = (E)-4-hydroxynon-2-enoate + NADH + 2 H(+). It catalyses the reaction (2E)-hexadecenal + NAD(+) + H2O = (E)-hexadec-2-enoate + NADH + 2 H(+). The catalysed reaction is benzaldehyde + NAD(+) + H2O = benzoate + NADH + 2 H(+). The enzyme catalyses a medium-chain fatty aldehyde + NADP(+) + H2O = a medium-chain fatty acid + NADPH + 2 H(+). It carries out the reaction hexanal + NADP(+) + H2O = hexanoate + NADPH + 2 H(+). It catalyses the reaction octanal + NADP(+) + H2O = octanoate + NADPH + 2 H(+). The catalysed reaction is nonanal + NADP(+) + H2O = nonanoate + NADPH + 2 H(+). The enzyme catalyses (2E)-octenal + NADP(+) + H2O = (2E)-octenoate + NADPH + 2 H(+). It carries out the reaction (E)-non-2-enal + NADP(+) + H2O = (E)-non-2-enoate + NADPH + 2 H(+). It catalyses the reaction (E)-4-hydroxynon-2-enal + NADP(+) + H2O = (E)-4-hydroxynon-2-enoate + NADPH + 2 H(+). The catalysed reaction is benzaldehyde + NADP(+) + H2O = benzoate + NADPH + 2 H(+). The protein operates within alcohol metabolism; ethanol degradation; acetate from ethanol: step 2/2. Its function is as follows. Oxidizes medium and long chain saturated and unsaturated fatty aldehydes generated in the plasma membrane into non-toxic fatty acids. May have a protective role against the cytotoxicity induced by lipid peroxidation. Short-chain fatty aldehydes are not good substrates. Can use both NADP(+) and NAD(+) as electron acceptor in vitro, however in vivo preference will depend on their tissue levels. Low activity towards acetaldehyde and 3,4-dihydroxyphenylacetaldehyde. Able to metabolize aromatic aldehydes such as benzaldehyde to their acid form. This is Aldehyde dehydrogenase family 3 member B1 (ALDH3B1) from Homo sapiens (Human).